Here is a 416-residue protein sequence, read N- to C-terminus: ORC1-type DNA replication protein 9 (416 aa).

Residues 79–83, Y226, and R238 contribute to the ATP site; that span reads SGKSL.

Belongs to the CDC6/cdc18 family.

Functionally, involved in regulation of DNA replication. The polypeptide is ORC1-type DNA replication protein 9 (cdc6i) (Haloarcula marismortui (strain ATCC 43049 / DSM 3752 / JCM 8966 / VKM B-1809) (Halobacterium marismortui)).